A 254-amino-acid polypeptide reads, in one-letter code: Triosephosphate isomerase (254 aa).

12-14 (NWK) is a substrate binding site. Histidine 99 functions as the Electrophile in the catalytic mechanism. Glutamate 169 serves as the catalytic Proton acceptor. Residues glycine 175, serine 214, and 235–236 (GG) contribute to the substrate site.

This sequence belongs to the triosephosphate isomerase family. In terms of assembly, homodimer.

It localises to the cytoplasm. The enzyme catalyses D-glyceraldehyde 3-phosphate = dihydroxyacetone phosphate. The protein operates within carbohydrate biosynthesis; gluconeogenesis. Its pathway is carbohydrate degradation; glycolysis; D-glyceraldehyde 3-phosphate from glycerone phosphate: step 1/1. Functionally, involved in the gluconeogenesis. Catalyzes stereospecifically the conversion of dihydroxyacetone phosphate (DHAP) to D-glyceraldehyde-3-phosphate (G3P). In Bartonella quintana (strain Toulouse) (Rochalimaea quintana), this protein is Triosephosphate isomerase.